The sequence spans 415 residues: Histidine--tRNA ligase (415 aa).

This sequence belongs to the class-II aminoacyl-tRNA synthetase family. As to quaternary structure, homodimer.

Its subcellular location is the cytoplasm. It catalyses the reaction tRNA(His) + L-histidine + ATP = L-histidyl-tRNA(His) + AMP + diphosphate + H(+). The polypeptide is Histidine--tRNA ligase (Rickettsia felis (strain ATCC VR-1525 / URRWXCal2) (Rickettsia azadi)).